Here is a 183-residue protein sequence, read N- to C-terminus: Nodulation protein L (183 aa).

The protein belongs to the transferase hexapeptide repeat family.

Its function is as follows. Acetyltransferase implicated in the O-acetylation of Nod factors. This is Nodulation protein L (nodL) from Rhizobium meliloti (strain 1021) (Ensifer meliloti).